The sequence spans 131 residues: MHLYLCVLVCLSIGMANCLLPGGIRRMTDEEIQNDEILLTGVEFAVDKYNSDTNSRLIATNVISATVQVVAGFKYNALIELRPRLCVQDPKTKIATCPLRMNLPTKCSFTFLYQSWVPQKYSMLSTKCLRA.

The N-terminal stretch at 1–18 (MHLYLCVLVCLSIGMANC) is a signal peptide. The Cystatin domain occupies 35 to 109 (DEILLTGVEF…RMNLPTKCSF (75 aa)). A Secondary area of contact motif is present at residues 68–72 (QVVAG). Intrachain disulfides connect Cys86/Cys97 and Cys107/Cys128.

The protein belongs to the cystatin family.

It localises to the secreted. The protein localises to the nematocyst. Its function is as follows. This recombinant protein inhibits the C1 cysteine protease papain (Ki is below 0.5 nM). In Cyanea capillata (Lion's mane jellyfish), this protein is Cystatin J.